Here is a 375-residue protein sequence, read N- to C-terminus: Succinyl-diaminopimelate desuccinylase (375 aa).

Histidine 66 is a binding site for Zn(2+). Aspartate 68 is a catalytic residue. Aspartate 99 lines the Zn(2+) pocket. Glutamate 133 acts as the Proton acceptor in catalysis. Glutamate 134, glutamate 162, and histidine 348 together coordinate Zn(2+).

This sequence belongs to the peptidase M20A family. DapE subfamily. As to quaternary structure, homodimer. Zn(2+) serves as cofactor. Co(2+) is required as a cofactor.

The catalysed reaction is N-succinyl-(2S,6S)-2,6-diaminopimelate + H2O = (2S,6S)-2,6-diaminopimelate + succinate. It functions in the pathway amino-acid biosynthesis; L-lysine biosynthesis via DAP pathway; LL-2,6-diaminopimelate from (S)-tetrahydrodipicolinate (succinylase route): step 3/3. Its function is as follows. Catalyzes the hydrolysis of N-succinyl-L,L-diaminopimelic acid (SDAP), forming succinate and LL-2,6-diaminopimelate (DAP), an intermediate involved in the bacterial biosynthesis of lysine and meso-diaminopimelic acid, an essential component of bacterial cell walls. The chain is Succinyl-diaminopimelate desuccinylase from Yersinia pestis bv. Antiqua (strain Antiqua).